We begin with the raw amino-acid sequence, 184 residues long: MVSSSRIARSFTRYTSALQRHTIVTKIKQKFPCPRSRTQGQSRRSETHTISRRRSCRAIARSNLGRVSSVTLPWFSCPSPAVVALAKKPFRTARSSCPRSRKSSRCRKSLLSWTAHHLLDEFPKRRIWVFLSFRIGGSLHRRHAMEKNICSTRARIRLISAISLLSKPIVEIVVGYPQSEDRRL.

Positions Pro-32–Arg-52 are disordered.

The protein localises to the mitochondrion. This is an uncharacterized protein from Arabidopsis thaliana (Mouse-ear cress).